The following is an 872-amino-acid chain: Protein SEY1 (872 aa).

Topologically, residues 1 to 749 (MVANGHFAGV…KRSAIGGITQ (749 aa)) are cytoplasmic. Positions 49–294 (GFNYHLISVF…IEGGIFLPEY (246 aa)) constitute a GB1/RHD3-type G domain. 59 to 66 (GSQSTGKS) provides a ligand contact to GTP. Residues 482–504 (SNYQQELSLYQKDLENIGGQLRR) adopt a coiled-coil conformation. The segment at 676 to 704 (LDKWIGHTPSSATPADEEDLTPIGGVDED) is disordered. Over residues 690-704 (ADEEDLTPIGGVDED) the composition is skewed to acidic residues. Residues 750-770 (VPLYFYGLLLALGWNEIVAVL) form a helical membrane-spanning segment. Over 771 to 773 (RNP) the chain is Lumenal. Residues 774–794 (AYFLLLFVCAVTAYVTYQLNL) traverse the membrane as a helical segment. Topologically, residues 795–872 (WGPIIKMTEA…IDDADDDDDF (78 aa)) are cytoplasmic. Residues 849–872 (NRKSAGGFQNNRSHIDDADDDDDF) are disordered.

It belongs to the TRAFAC class dynamin-like GTPase superfamily. GB1/RHD3 GTPase family. RHD3 subfamily.

Its subcellular location is the endoplasmic reticulum membrane. Its function is as follows. Cooperates with the reticulon proteins and tubule-shaping DP1 family proteins to generate and maintain the structure of the tubular endoplasmic reticulum network. Has GTPase activity, which is required for its function in ER organization. The chain is Protein SEY1 from Paracoccidioides brasiliensis (strain Pb03).